Consider the following 597-residue polypeptide: Mediator of RNA polymerase II transcription subunit 26 (597 aa).

The 78-residue stretch at 10 to 87 (EIRERLLQAI…RNWQKLIEPV (78 aa)) folds into the TFIIS N-terminal domain. Disordered regions lie at residues 96-236 (GIPN…VKHP), 254-418 (LDDA…ARVK), and 436-459 (TLKDPAQVESSAPTEQHRTETDKQ). Basic and acidic residues predominate over residues 128 to 147 (QELKGRNDIQKAHSPKADKT). Polar residues predominate over residues 226 to 236 (HTNSPGLVKHP). The segment covering 262–273 (PRSPRCSSFSPR) has biased composition (low complexity). Over residues 321-338 (KRLESPRQDRVSSPHKPV) the composition is skewed to basic and acidic residues. Residues 341–377 (LPSTDCHQVLPRTSQQHIPRSSLVDSQTPRTGFSPES) are compositionally biased toward polar residues. The segment covering 450–459 (EQHRTETDKQ) has biased composition (basic and acidic residues).

It belongs to the Mediator complex subunit 26 family. Component of the Mediator complex.

Its subcellular location is the nucleus. In terms of biological role, component of the Mediator complex, a coactivator involved in the regulated transcription of nearly all RNA polymerase II-dependent genes. Mediator functions as a bridge to convey information from gene-specific regulatory proteins to the basal RNA polymerase II transcription machinery. Mediator is recruited to promoters by direct interactions with regulatory proteins and serves as a scaffold for the assembly of a functional preinitiation complex with RNA polymerase II and the general transcription factors. This chain is Mediator of RNA polymerase II transcription subunit 26 (med26), found in Xenopus laevis (African clawed frog).